The sequence spans 286 residues: Tryptophan 2,3-dioxygenase (286 aa).

Substrate contacts are provided by residues 53–57, Y115, and R119; that span reads FIVQH. Residue H242 participates in heme binding. A substrate-binding site is contributed by T256.

Belongs to the tryptophan 2,3-dioxygenase family. As to quaternary structure, homotetramer. The cofactor is heme.

It catalyses the reaction L-tryptophan + O2 = N-formyl-L-kynurenine. The protein operates within amino-acid degradation; L-tryptophan degradation via kynurenine pathway; L-kynurenine from L-tryptophan: step 1/2. Functionally, heme-dependent dioxygenase that catalyzes the oxidative cleavage of the L-tryptophan (L-Trp) pyrrole ring and converts L-tryptophan to N-formyl-L-kynurenine. Catalyzes the oxidative cleavage of the indole moiety. This chain is Tryptophan 2,3-dioxygenase, found in Kineococcus radiotolerans (strain ATCC BAA-149 / DSM 14245 / SRS30216).